The chain runs to 695 residues: NADPH--cytochrome P450 reductase (695 aa).

The Lumenal portion of the chain corresponds to 1–8 (MAQLDTLD). A helical transmembrane segment spans residues 9–31 (LVVLVALLVGSVAYFTKGTYWAV). The Cytoplasmic portion of the chain corresponds to 32-695 (AKDPYASSGP…SGSYQEDVWS (664 aa)). In terms of domain architecture, Flavodoxin-like spans 66–221 (CVIFYGSQTG…DFLAWKEPMW (156 aa)). FMN is bound by residues 72-77 (SQTGTA), 123-126 (ATYG), 169-178 (LGNNTYEHYN), and Asp204. Positions 277–538 (HNPFIAPIVE…HVRHSNFKLP (262 aa)) constitute an FAD-binding FR-type domain. Arg296 provides a ligand contact to NADP(+). Residues 451–454 (RYYS), 469–471 (TAV), and 486–489 (GVTT) contribute to the FAD site. NADP(+) is bound by residues Thr552, 614 to 615 (SR), 620 to 624 (KVYVQ), and Glu656. An FAD-binding site is contributed by Trp694.

The protein belongs to the NADPH--cytochrome P450 reductase family. It in the N-terminal section; belongs to the flavodoxin family. In the C-terminal section; belongs to the flavoprotein pyridine nucleotide cytochrome reductase family. FAD is required as a cofactor. Requires FMN as cofactor.

It localises to the endoplasmic reticulum membrane. The protein localises to the mitochondrion outer membrane. The protein resides in the cell membrane. The catalysed reaction is 2 oxidized [cytochrome P450] + NADPH = 2 reduced [cytochrome P450] + NADP(+) + H(+). Functionally, this enzyme is required for electron transfer from NADP to cytochrome P450 in microsomes. It can also provide electron transfer to heme oxygenase and cytochrome B5. Involved in ergosterol biosynthesis. In Aspergillus oryzae (strain ATCC 42149 / RIB 40) (Yellow koji mold), this protein is NADPH--cytochrome P450 reductase.